We begin with the raw amino-acid sequence, 1208 residues long: Chromosome partition protein Smc (1208 aa).

An ATP-binding site is contributed by 32-39 (PNGCGKSN). 3 coiled-coil regions span residues 170–205 (VTKYRERRKETEGRLRDARDNLARLDDIRMELGERI), 239–504 (EARA…ARVQ), and 694–1054 (VIER…QLQD).

It belongs to the SMC family. Homodimer.

It localises to the cytoplasm. In terms of biological role, required for chromosome condensation and partitioning. In Thauera aminoaromatica, this protein is Chromosome partition protein Smc.